The chain runs to 3423 residues: Genome polyprotein (3423 aa).

The disordered stretch occupies residues 1–25 (MKNPKKKSGGFRIVNMLKRGVARVS). The Cytoplasmic segment spans residues 1-104 (MKNPKKKSGG…INARKEKKRR (104 aa)). Positions 37–72 (LLLGHGPIRMVLAILAFLRFTAIKPSLGLINRWGSV) are hydrophobic; homodimerization of capsid protein C. Positions 105–122 (GTDTSVGIVGLLLTTAMA) are cleaved as a propeptide — ER anchor for capsid protein C, removed in mature form by serine protease NS3. A helical membrane pass occupies residues 105-125 (GTDTSVGIVGLLLTTAMAVEV). The Extracellular segment spans residues 126–249 (TRRGNAYYMY…YTKHLIRVEN (124 aa)). Asparagine 192 carries an N-linked (GlcNAc...) asparagine; by host glycan. The chain crosses the membrane as a helical span at residues 250–269 (WIFRNPGFALAAAAIAWLLG). Residues 270–274 (SSTSQ) lie on the Cytoplasmic side of the membrane. A helical transmembrane segment spans residues 275–290 (KVIYLVMILLIAPAYS). At 291 to 745 (IRCIGVSNRD…HQIFGAAFKS (455 aa)) the chain is on the extracellular side. A Glycyl lysine isopeptide (Lys-Gly) (interchain with G-Cter in ubiquitin) cross-link involves residue lysine 328. 2 disulfides stabilise this stretch: cysteine 350-cysteine 406 and cysteine 382-cysteine 411. A fusion peptide region spans residues 388 to 401 (DRGWGNGCGLFGKG). Residue asparagine 444 is glycosylated (N-linked (GlcNAc...) asparagine; by host). Disulfide bonds link cysteine 480/cysteine 581 and cysteine 598/cysteine 629. Lysine 571 is covalently cross-linked (Glycyl lysine isopeptide (Lys-Gly) (interchain with G-Cter in ubiquitin)). A helical transmembrane segment spans residues 746–767 (LFGGMSWFSQILIGTLLVWLGL). Residues 768–773 (NTKNGS) are Cytoplasmic-facing. A helical membrane pass occupies residues 774–794 (ISLMCLALGGVLIFLSTAVSA). The Lumenal segment spans residues 795 to 1177 (DVGCSVDFSK…EGLKKRMTTK (383 aa)). Cystine bridges form between cysteine 798/cysteine 809, cysteine 849/cysteine 937, cysteine 973/cysteine 1017, cysteine 1074/cysteine 1123, cysteine 1085/cysteine 1106, and cysteine 1107/cysteine 1110. Residues asparagine 924 and asparagine 1001 are each glycosylated (N-linked (GlcNAc...) asparagine; by host). A helical transmembrane segment spans residues 1178 to 1198 (IIISTSMAVLVAMILGGFSMS). Topologically, residues 1199–1220 (DLAKLAILMGATFAEMNTGGDV) are cytoplasmic. A helical membrane pass occupies residues 1221-1241 (AHLALIAAFKVRPALLVSFIF). Topologically, residues 1242-1270 (RANWTPRESMLLALASCLLQTAISALEGD) are lumenal. A helical transmembrane segment spans residues 1271 to 1291 (LMVPINGFALAWLAIRAMVVP). Residues 1292-1295 (RTDN) are Cytoplasmic-facing. Residues 1296–1316 (ITLAILAALTPLARGTLLVAW) form a helical membrane-spanning segment. Topologically, residues 1317-1345 (RAGLATCGGFMLLSLKGKGSVKKNLPFVM) are lumenal. Residues 1346–1366 (ALGLTAVRLVDPINVVGLLLL) form a helical membrane-spanning segment. Residues 1367–1373 (TRSGKRS) are Cytoplasmic-facing. Residues 1374-1394 (WPPSEVLTAVGLICALAGGFA) form a helical membrane-spanning segment. The Lumenal segment spans residues 1395–1397 (KAD). The chain crosses the membrane as a helical span at residues 1398–1418 (IEMAGPMAAVGLLIVSYVVSG). Residues 1419-1472 (KSVDMYIERAGDITWEKDAEVTGNSPRLDVALDESGDFSLVEDDGPPMREIILK) are Cytoplasmic-facing. An interacts with and activates NS3 protease region spans residues 1425–1464 (IERAGDITWEKDAEVTGNSPRLDVALDESGDFSLVEDDGP). Residues 1429–1451 (GDITWEKDAEVTGNSPRLDVALD) are disordered. Residues 1473–1493 (VVLMAICGMNPIAIPFAAGAW) constitute an intramembrane region (helical). The Lumenal portion of the chain corresponds to 1494–2170 (YVYVKTGKRS…KAAAAQLPET (677 aa)). One can recognise a Peptidase S7 domain in the interval 1503-1680 (SGALWDVPAP…RREEETPVEC (178 aa)). Active-site charge relay system; for serine protease NS3 activity residues include histidine 1553, aspartate 1577, and serine 1637. A Helicase ATP-binding domain is found at 1683-1839 (PSMLKKKQLT…DSNSPIMDTE (157 aa)). The tract at residues 1687 to 1690 (KKKQ) is important for RNA-binding. 1696–1703 (LHPGAGKT) serves as a coordination point for ATP. The DEAH box signature appears at 1787 to 1790 (DEAH). A Helicase C-terminal domain is found at 1834 to 2013 (PIMDTEVEVP…GLIASLYRPE (180 aa)). Residue lysine 1891 is modified to N6-acetyllysine; by host. A helical transmembrane segment spans residues 2171–2191 (LETIMLLGLLGTVSLGIFFVL). At 2192–2195 (MRNK) the chain is on the lumenal side. An intramembrane region (helical) is located at residues 2196 to 2216 (GIGKMGFGMVTLGASAWLMWL). The Cytoplasmic portion of the chain corresponds to 2217-2218 (SE). Residues 2219–2239 (IEPARIACVLIVVFLLLVVLI) form a helical membrane-spanning segment. Residues 2240 to 2254 (PEPEKQRSPQDNQMA) are Lumenal-facing. Residues 2255–2269 (IIIMVAVGLLGLITA) constitute an intramembrane region (helical). Residues 2270–2307 (NELGWLERTKSDLSHLMGRREEGATIGFSMDIDLRPAS) are Lumenal-facing. The segment at residues 2308–2328 (AWAIYAALTTFITPAVQHAVT) is an intramembrane region (helical). Over 2329 to 2344 (TSYNNYSLMAMATQAG) the chain is Lumenal. The helical transmembrane segment at 2345-2365 (VLFGMGKGMPFYAWDFGVPLL) threads the bilayer. Residues 2366 to 2375 (MIGCYSQLTP) lie on the Cytoplasmic side of the membrane. The helical transmembrane segment at 2376–2396 (LTLIVAIILLVAHYMYLIPGL) threads the bilayer. Topologically, residues 2397-2441 (QAAAARAAQKRTAAGIMKNPVVDGIVVTDIDTMTIDPQVEKKMGQ) are lumenal. Residues 2442–2462 (VLLIAVAVSSAILSRTAWGWG) form a helical membrane-spanning segment. Residues 2463–3423 (EAGALITAAT…GEEGSTPGVL (961 aa)) lie on the Cytoplasmic side of the membrane. The mRNA cap 0-1 NS5-type MT domain occupies 2521–2785 (GGGTGETLGE…DVNLGSGTRA (265 aa)). 2533–2539 (KARLNQM) lines the GTP pocket. S-adenosyl-L-methionine is bound at residue serine 2576. Serine 2576 is modified (phosphoserine). Lysine 2581 acts as the For 2'-O-MTase activity in catalysis. Residues 2597–2600 (VIDL) are SUMO-interacting motif (SIM). S-adenosyl-L-methionine contacts are provided by glycine 2606, tryptophan 2607, threonine 2624, lysine 2625, histidine 2630, glutamate 2631, aspartate 2651, valine 2652, aspartate 2666, and isoleucine 2667. The active-site For 2'-O-MTase activity is the aspartate 2666. 2669–2675 (ESSSSPE) is a GTP binding site. Residue lysine 2702 is the For 2'-O-MTase activity of the active site. 2733-2735 (RNS) lines the GTP pocket. The active-site For 2'-O-MTase activity is glutamate 2738. Tyrosine 2740 is a binding site for S-adenosyl-L-methionine. A Nuclear localization signal (NLS) motif is present at residues 2908-2914 (KHKRPRV). Zn(2+) contacts are provided by glutamate 2959, histidine 2963, cysteine 2968, and cysteine 2971. A RdRp catalytic domain is found at 3049–3199 (GRMYADDTAG…KPIDDRFAHA (151 aa)). The Zn(2+) site is built by histidine 3234, cysteine 3250, and cysteine 3369.

It in the N-terminal section; belongs to the class I-like SAM-binding methyltransferase superfamily. mRNA cap 0-1 NS5-type methyltransferase family. As to quaternary structure, homodimer. Interacts with host SERTAD3; this interaction promotes capsid protein C degradation. Interacts with host CAPRIN1; this interaction is probably linked to the inhibition of stress granules formation by the virus. Interacts with host G3BP1; this interaction is probably linked to the inhibition of stress granules formation by the virus. Forms heterodimers with envelope protein E in the endoplasmic reticulum and Golgi. Interacts with non-structural protein 2A. In terms of assembly, homodimer; in the endoplasmic reticulum and Golgi. Interacts with host TYRO3, AXL and DC-SIGN proteins. Interacts with non-structural protein 2A. Interacts with host HAVCR1; this interaction likely mediates virus attachment to host cell. Interacts with host NCAM1. Interacts with host HSPA5. Interacts with Aedes aegypti SRPN25, APY and venom allergen-1 salivary proteins; the interactions do not affect Zika virus replication in human endothelial cells and keratinocytes. As to quaternary structure, homodimer; Homohexamer when secreted. Interacts with host TBK1. Interacts with host USP8. Interacts with envelope protein E. Interacts with the structural protein prM/E complex, and the NS2B/NS3 protease complex. In terms of assembly, forms a heterodimer with serine protease NS3. May form homooligomers. Interacts with human SPCS1. Interacts with non-structural protein 2A. As to quaternary structure, forms a heterodimer with NS2B. Interacts with NS4B. Interacts with unphosphorylated RNA-directed RNA polymerase NS5; this interaction stimulates RNA-directed RNA polymerase NS5 guanylyltransferase activity. Interacts with non-structural protein 2A. Interacts with host SHFL; this interaction promotes NS3 degradation via a lysosome-dependent pathway. Interacts with host CEP63; this interaction disorganizes the centrosome and inhibits host innate immune response. May interact with host ANKLE2; the interaction may cause defects in brain development, such as microcephaly. May interact with host SRPRA and SEC61G. In terms of assembly, interacts with serine protease NS3. Interacts with NS1. As to quaternary structure, homodimer. Interacts with host STAT2; this interaction inhibits the phosphorylation of the latter, and, when all viral proteins are present (polyprotein), targets STAT2 for degradation. Interacts with host TBK1 and IKBKE; these interactions lead to the inhibition of the host RIG-I signaling pathway. Interacts with host PAF1 complex; the interaction may prevent the recruitment of the host PAF1 complex to interferon-responsive genes, and thus reduces the immune response. Interacts with serine protease NS3. Interacts with host KPNA2. Interacts with host ZSWIM8; this interaction allows STAT2 binding to ZSWIM8 and subsequent proteasomal degradation leading to inhibition of interferon signaling. Specific enzymatic cleavages in vivo yield mature proteins. Cleavages in the lumen of endoplasmic reticulum are performed by host signal peptidase, whereas cleavages in the cytoplasmic side are performed by serine protease NS3. Signal cleavage at the 2K-4B site requires a prior NS3 protease-mediated cleavage at the 4A-2K site. In terms of processing, cleaved in post-Golgi vesicles by a host furin, releasing the mature small envelope protein M, and peptide pr. This cleavage is incomplete as up to 30% of viral particles still carry uncleaved prM. Post-translationally, N-glycosylation plays a role in virulence in mammalian and mosquito hosts, but may have no effect on neurovirulence. Ubiquitination by host TRIM7 promotes virus attachment and fusion of the virus and the host endosome membrane. In terms of processing, N-glycosylated. The excreted form is glycosylated, which is required for efficient secretion of the protein from infected cells. Post-translationally, ubiquitination by host TRIM22 leads to proteasomal degradation. Acetylated by host KAT5. Acetylation modulates NS3 RNA-binding and unwinding activities and plays an important positive role for viral replication. In terms of processing, phosphorylated on serines residues. This phosphorylation may trigger NS5 nuclear localization. Post-translationally, sumoylated, required for regulating IFN induced interferon stimulated genes/ISGs.

It is found in the virion. Its subcellular location is the host nucleus. It localises to the host cytoplasm. The protein localises to the host perinuclear region. The protein resides in the secreted. It is found in the virion membrane. Its subcellular location is the host endoplasmic reticulum membrane. It localises to the host cell surface. The catalysed reaction is a 5'-end (5'-triphosphoguanosine)-ribonucleoside in mRNA + S-adenosyl-L-methionine = a 5'-end (N(7)-methyl 5'-triphosphoguanosine)-ribonucleoside in mRNA + S-adenosyl-L-homocysteine. The enzyme catalyses a 5'-end (N(7)-methyl 5'-triphosphoguanosine)-ribonucleoside in mRNA + S-adenosyl-L-methionine = a 5'-end (N(7)-methyl 5'-triphosphoguanosine)-(2'-O-methyl-ribonucleoside) in mRNA + S-adenosyl-L-homocysteine + H(+). It carries out the reaction RNA(n) + a ribonucleoside 5'-triphosphate = RNA(n+1) + diphosphate. It catalyses the reaction Selective hydrolysis of -Xaa-Xaa-|-Yaa- bonds in which each of the Xaa can be either Arg or Lys and Yaa can be either Ser or Ala.. The catalysed reaction is a ribonucleoside 5'-triphosphate + H2O = a ribonucleoside 5'-diphosphate + phosphate + H(+). The enzyme catalyses ATP + H2O = ADP + phosphate + H(+). In terms of biological role, plays a role in virus budding by binding to the cell membrane and gathering the viral RNA into a nucleocapsid that forms the core of the mature virus particle. During virus entry, may induce genome penetration into the host cytoplasm after hemifusion induced by the surface proteins. Can migrate to the cell nucleus where it modulates host functions. Inhibits the integrated stress response (ISR) in the infected cell. Functionally, inhibits RNA silencing by interfering with host Dicer. Prevents premature fusion activity of envelope proteins in trans-Golgi by binding to envelope protein E at pH 6.0. After virion release in extracellular space, gets dissociated from E dimers. Its function is as follows. Plays a role in host immune defense modulation and protection of envelope protein E during virion synthesis. PrM-E cleavage is inefficient, many virions are only partially matured and immature prM-E proteins could play a role in immune evasion. Contributes to fetal microcephaly in humans. Acts as a chaperone for envelope protein E during intracellular virion assembly by masking and inactivating envelope protein E fusion peptide. prM is the only viral peptide matured by host furin in the trans-Golgi network probably to avoid catastrophic activation of the viral fusion activity in acidic Golgi compartment prior to virion release. In terms of biological role, may play a role in virus budding. Exerts cytotoxic effects by activating a mitochondrial apoptotic pathway through M ectodomain. May display a viroporin activity. Functionally, binds to host cell surface receptors and mediates fusion between viral and cellular membranes. Efficient virus attachment to cell is, at least in part, mediated by host HAVCR1 in a cell-type specific manner. In addition, host NCAM1 can also be used as entry receptor. Interaction with host HSPA5 plays an important role in the early stages of infection as well. Envelope protein is synthesized in the endoplasmic reticulum and forms a heterodimer with protein prM. The heterodimer plays a role in virion budding in the ER, and the newly formed immature particle is covered with 60 spikes composed of heterodimers between precursor prM and envelope protein E. The virion is transported to the Golgi apparatus where the low pH causes the dissociation of PrM-E heterodimers and formation of E homodimers. PrM-E cleavage is inefficient, many virions are only partially matured and immature prM-E proteins could play a role in immune evasion. Plays a role in the inhibition of host RLR-induced interferon-beta activation by targeting TANK-binding kinase 1/TBK1. In addition, recruits the host deubiquitinase USP8 to cleave 'Lys-11'-linked polyubiquitin chains from caspase-1/CASP1 thus inhibiting its proteasomal degradation. In turn, stabilized CASP1 promotes cleavage of cGAS, which inhibits its ability to recognize mitochondrial DNA release and initiate type I interferon signaling. Its function is as follows. Component of the viral RNA replication complex that recruits genomic RNA, the structural protein prM/E complex, and the NS2B/NS3 protease complex to the virion assembly site and orchestrates virus morphogenesis. Also antagonizes the host alpha/beta interferon antiviral response. May disrupt adherens junction formation and thereby impair proliferation of radial cells in the host cortex. In terms of biological role, required cofactor for the serine protease function of NS3. Functionally, displays three enzymatic activities: serine protease, NTPase and RNA helicase. NS3 serine protease, in association with NS2B, performs its autocleavage and cleaves the polyprotein at dibasic sites in the cytoplasm: C-prM, NS2A-NS2B, NS2B-NS3, NS3-NS4A, NS4A-2K and NS4B-NS5. NS3 RNA helicase binds RNA and unwinds dsRNA in the 3' to 5' direction. Leads to translation arrest when expressed ex vivo. Disrupts host centrosome organization in a CEP63-dependent manner to degrade host TBK1 and inhibits innate immune response. Inhibits the integrated stress response (ISR) in the infected cell. Regulates the ATPase activity of the NS3 helicase activity. NS4A allows NS3 helicase to conserve energy during unwinding. Cooperatively with NS4B suppresses the Akt-mTOR pathway and leads to cellular dysregulation. By inhibiting host ANKLE2 functions, may cause defects in brain development, such as microcephaly. Also antagonizes the host MDA5-mediated induction of alpha/beta interferon antiviral response. Leads to translation arrest when expressed ex vivo. Inhibits the integrated stress response (ISR) in the infected cell. Its function is as follows. Functions as a signal peptide for NS4B and is required for the interferon antagonism activity of the latter. In terms of biological role, induces the formation of ER-derived membrane vesicles where the viral replication takes place. Also plays a role in the inhibition of host RLR-induced interferon-beta production at TANK-binding kinase 1/TBK1 level. Cooperatively with NS4A suppresses the Akt-mTOR pathway and leads to cellular dysregulation. Functionally, replicates the viral (+) and (-) RNA genome, and performs the capping of genomes in the cytoplasm. Methylates viral RNA cap at guanine N-7 and ribose 2'-O positions. Once sufficient NS5 is expressed, binds to the cap-proximal structure and inhibits further translation of the viral genome. Besides its role in RNA genome replication, also prevents the establishment of a cellular antiviral state by blocking the interferon-alpha/beta (IFN-alpha/beta) signaling pathway. Mechanistically, interferes with host kinases TBK1 and IKKE upstream of interferon regulatory factor 3/IRF3 to inhibit the RIG-I pathway. Also antagonizes type I interferon signaling by targeting STAT2 for degradation by the proteasome thereby preventing activation of JAK-STAT signaling pathway. Mechanistically, acts as a scaffold protein to connect host ZSWIM8/CUL3 ligase complex and STAT2, leading to STAT2 degradation. Within the host nucleus, disrupts host SUMO1 and STAT2 co-localization with PML, resulting in PML degradation. May also reduce immune responses by preventing the recruitment of the host PAF1 complex to interferon-responsive genes. The protein is Genome polyprotein of Zika virus (isolate ZIKV/Human/Cambodia/FSS13025/2010) (ZIKV).